Consider the following 563-residue polypeptide: Arginine--tRNA ligase (563 aa).

Residues 121-131 carry the 'HIGH' region motif; sequence PNIAKPFSIGH.

This sequence belongs to the class-I aminoacyl-tRNA synthetase family. As to quaternary structure, monomer.

It localises to the cytoplasm. It carries out the reaction tRNA(Arg) + L-arginine + ATP = L-arginyl-tRNA(Arg) + AMP + diphosphate. The protein is Arginine--tRNA ligase of Streptococcus pneumoniae (strain CGSP14).